A 347-amino-acid chain; its full sequence is Probable arabinogalactan endo-beta-1,4-galactanase A (347 aa).

An N-terminal signal peptide occupies residues 1 to 16 (MLFSYLLATLPLLANA). Glu150 serves as the catalytic Proton donor. The active-site Nucleophile is the Glu260.

It belongs to the glycosyl hydrolase 53 family.

It localises to the secreted. It carries out the reaction The enzyme specifically hydrolyzes (1-&gt;4)-beta-D-galactosidic linkages in type I arabinogalactans.. Endogalactanase involved in the degradation of plant cell wall polysaccharides, and more particularly of hairy regions of pectin. In Aspergillus flavus (strain ATCC 200026 / FGSC A1120 / IAM 13836 / NRRL 3357 / JCM 12722 / SRRC 167), this protein is Probable arabinogalactan endo-beta-1,4-galactanase A (galA).